Here is a 408-residue protein sequence, read N- to C-terminus: Histidine--tRNA ligase (408 aa).

The protein belongs to the class-II aminoacyl-tRNA synthetase family. In terms of assembly, homodimer.

It localises to the cytoplasm. The catalysed reaction is tRNA(His) + L-histidine + ATP = L-histidyl-tRNA(His) + AMP + diphosphate + H(+). The sequence is that of Histidine--tRNA ligase from Campylobacter jejuni subsp. jejuni serotype O:6 (strain 81116 / NCTC 11828).